The following is a 242-amino-acid chain: Protein CDV3 homolog B (242 aa).

Residues 1-15 (MAEPEERSLDDFFAK) are compositionally biased toward basic and acidic residues. A disordered region spans residues 1–242 (MAEPEERSLD…DNQYAVLGEQ (242 aa)). Ala-2 is subject to N-acetylalanine. Low complexity predominate over residues 30 to 57 (AAGSRGPARPSDGATSSSLSSYVSAAGK). The segment covering 59-75 (VKKEKSGKSENPDQLQE) has biased composition (basic and acidic residues). Positions 105-122 (KEDDENENKEEQGADWEE) are enriched in acidic residues. 2 stretches are compositionally biased toward polar residues: residues 129–143 (DKSSGPWNKTAQAQA) and 183–194 (SDTQFPSPQATA). Positions 195–213 (KHTESRREKEMEKTFEIVK) are enriched in basic and acidic residues.

It belongs to the CDV3 family.

It is found in the cytoplasm. The chain is Protein CDV3 homolog B (cdv3-b) from Xenopus laevis (African clawed frog).